An 825-amino-acid chain; its full sequence is PR domain zinc finger protein 1 (825 aa).

Residues 84–201 (PRNLLFKYAT…ANQELLVWYC (118 aa)) enclose the SET domain. Positions 324 to 361 (ITRSPIPSSTTPSPSARSSPDQSLKSSSPHSSPGNTVS) are enriched in low complexity. The tract at residues 324–369 (ITRSPIPSSTTPSPSARSSPDQSLKSSSPHSSPGNTVSPVGPGSQE) is disordered. The interval 527–574 (HVVQPKATSAAMAAPSSDEAMNLIKNKRNMTGYKTLPYPLKKQNGKIK) is interaction with PIAS1. 4 C2H2-type zinc fingers span residues 575 to 597 (YECNVCAKTFGQLSNLKVHLRVH), 603 to 625 (FKCQTCNKGFTQLAHLQKHYLVH), 631 to 653 (HECQVCHKRFSSTSNLKTHLRLH), and 659 to 681 (YQCKVCPAKFTQFVHLKLHKRLH). Lysine 816 is covalently cross-linked (Glycyl lysine isopeptide (Lys-Gly) (interchain with G-Cter in SUMO1); alternate). Residue lysine 816 forms a Glycyl lysine isopeptide (Lys-Gly) (interchain with G-Cter in SUMO2); alternate linkage.

Belongs to the class V-like SAM-binding methyltransferase superfamily. As to quaternary structure, interacts with PRMT5. Interacts with FBXO10. Interacts with FBXO11. Interacts with multiple nuclear sumoylation E3 ligases, including CBX4, PIAS1, PIAS2, PIAS3, PIAS4, PML and RNF4, but not RANBP2. Interacts with LDB1, SMARCD3 and SMARCC1. Interacts with EEIG1; following TNFSF11/RANKL stimulation in bone marrow-derived macrophages, the interaction promotes the binding of PRDM1/BLIMP1 to the gene promoter of IRF8. Sumoylation at Lys-816 by PIAS1 augments transcriptional repressor activity, and is critical for plasma cell differentiation. Can be sumoylated with SUMO1 and SUMO2 by PML. Degradation of the wild-type protein mostly depends upon sumoylation, rather than ubiquitination. Desumoylated by SENP1 and SENP6. In terms of processing, ubiquitinated by the SCF(FBXO11) complex, leading to its degradation by the proteasome.

The protein localises to the nucleus. The protein resides in the cytoplasm. Transcription factor that mediates a transcriptional program in various innate and adaptive immune tissue-resident lymphocyte T cell types such as tissue-resident memory T (Trm), natural killer (trNK) and natural killer T (NKT) cells and negatively regulates gene expression of proteins that promote the egress of tissue-resident T-cell populations from non-lymphoid organs. Plays a role in the development, retention and long-term establishment of adaptive and innate tissue-resident lymphocyte T cell types in non-lymphoid organs, such as the skin and gut, but also in other nonbarrier tissues like liver and kidney, and therefore may provide immediate immunological protection against reactivating infections or viral reinfection. Binds specifically to the PRDI element in the promoter of the beta-interferon gene. Drives the maturation of B-lymphocytes into Ig secreting cells. Associates with the transcriptional repressor ZNF683 to chromatin at gene promoter regions. Binds to the promoter and acts as a transcriptional repressor of IRF8, thereby promotes transcription of osteoclast differentiation factors such as NFATC1 and EEIG1. In Homo sapiens (Human), this protein is PR domain zinc finger protein 1 (PRDM1).